Here is a 508-residue protein sequence, read N- to C-terminus: DNA-directed RNA polymerase subunit Rpo1C (508 aa).

The unknown stretch occupies residues 1–123; it reads MIIWKDTAKN…REKYEYEKKV (123 aa). Residues 124 to 508 form a DNA-directed RNA polymerase subunit Rpo1C region; the sequence is SSQVLDVIAE…IYKGYPKTKK (385 aa).

Belongs to the RNA polymerase beta' chain family. As to quaternary structure, part of the RNA polymerase complex.

It is found in the cytoplasm. The enzyme catalyses RNA(n) + a ribonucleoside 5'-triphosphate = RNA(n+1) + diphosphate. Its function is as follows. DNA-dependent RNA polymerase (RNAP) catalyzes the transcription of DNA into RNA using the four ribonucleoside triphosphates as substrates. Forms part of the jaw domain. The polypeptide is DNA-directed RNA polymerase subunit Rpo1C (Thermoplasma volcanium (strain ATCC 51530 / DSM 4299 / JCM 9571 / NBRC 15438 / GSS1)).